The following is a 247-amino-acid chain: uncharacterized protein (247 aa).

This is an uncharacterized protein from Acidianus bottle-shaped virus (isolate Italy/Pozzuoli) (ABV).